The chain runs to 345 residues: uncharacterized protein (345 aa).

The disordered stretch occupies residues 1 to 98 (MNDEMKGKSG…ISGKSFIDPE (98 aa)). Composition is skewed to basic and acidic residues over residues 18 to 27 (RSDDDSDKRT), 42 to 68 (SRAD…EDSP), and 76 to 86 (PGDETPEKADH).

Belongs to the class IV-like SAM-binding methyltransferase superfamily. RNA methyltransferase TrmH family.

This is an uncharacterized protein from Escherichia coli O157:H7.